We begin with the raw amino-acid sequence, 274 residues long: THAP domain-containing protein 8 (274 aa).

The THAP-type zinc-finger motif lies at 1 to 85 (MPKYCRAPNC…LRPDAVPSIF (85 aa)). The tract at residues 83-121 (SIFSRGPPAKSQRRTRSTQKPVSPPPPLQKNTPLPQSPA) is disordered.

This is THAP domain-containing protein 8 (THAP8) from Homo sapiens (Human).